An 812-amino-acid polypeptide reads, in one-letter code: Hyaluronate lyase HylB (812 aa).

The tat-type signal signal peptide spans 1 to 32 (MFGTPSRRTFLTASALSAMALAASPTVTDAIA). Catalysis depends on residues asparagine 222, histidine 272, and tyrosine 281.

It belongs to the polysaccharide lyase 8 family. In terms of processing, predicted to be exported by the Tat system. The position of the signal peptide cleavage has been experimentally proven.

It localises to the secreted. The catalysed reaction is [hyaluronan](n) = n 3-(4-deoxy-beta-D-gluc-4-enuronosyl)-N-acetyl-D-glucosamine + H2O. Functionally, degrades hyaluronic acid (HA) exclusively into HA disaccharides (HA-2). Produced HA-2s confer anti-inflammatory properties leading to reduced immunopathology in the mouse model of acne. The sequence is that of Hyaluronate lyase HylB from Cutibacterium acnes (Propionibacterium acnes).